The primary structure comprises 232 residues: Small ribosomal subunit protein uS3 (232 aa).

Residues 39–107 (VRQFLTKELA…PAQINIAEVR (69 aa)) enclose the KH type-2 domain.

It belongs to the universal ribosomal protein uS3 family. Part of the 30S ribosomal subunit. Forms a tight complex with proteins S10 and S14.

Its function is as follows. Binds the lower part of the 30S subunit head. Binds mRNA in the 70S ribosome, positioning it for translation. This chain is Small ribosomal subunit protein uS3, found in Yersinia pseudotuberculosis serotype O:1b (strain IP 31758).